The chain runs to 302 residues: MDRERLTHLQQLEAESIHIIREVAAEFENPVMMYSIGKDSSVMLHLARKAFYPGKIPFPLLHVDTDWKFKEMIKFRDETARKYGLDLIVHKNPDGLAMGINPFVHGSGKHTDIMKTEGLKQALNKYGFDAAFGGARRDEEKSRAKERVYSFRDKSHRWDPKNQRPELWRVYNSQVNKGESIRVFPLSNWTELDIWQYIYLENIDIVPLYFAAMRPVVERNGIKIMVDDERMPIGPEDEVKQELVRFRTLGCYPLTGAIESAATTLPEIIEEMLLTTSSERQGRLIDHDQAGSMEQKKRQGYF.

Belongs to the PAPS reductase family. CysD subfamily. In terms of assembly, heterodimer composed of CysD, the smaller subunit, and CysN.

The catalysed reaction is sulfate + ATP + H(+) = adenosine 5'-phosphosulfate + diphosphate. The protein operates within sulfur metabolism; hydrogen sulfide biosynthesis; sulfite from sulfate: step 1/3. In terms of biological role, with CysN forms the ATP sulfurylase (ATPS) that catalyzes the adenylation of sulfate producing adenosine 5'-phosphosulfate (APS) and diphosphate, the first enzymatic step in sulfur assimilation pathway. APS synthesis involves the formation of a high-energy phosphoric-sulfuric acid anhydride bond driven by GTP hydrolysis by CysN coupled to ATP hydrolysis by CysD. This Aeromonas hydrophila subsp. hydrophila (strain ATCC 7966 / DSM 30187 / BCRC 13018 / CCUG 14551 / JCM 1027 / KCTC 2358 / NCIMB 9240 / NCTC 8049) protein is Sulfate adenylyltransferase subunit 2.